The chain runs to 437 residues: Dihydrofolate synthase/folylpolyglutamate synthase (437 aa).

28 to 30 lines the 7,8-dihydropteroate pocket; that stretch reads DLG. 58 to 61 is a binding site for ATP; sequence GKGT. Residue serine 82 coordinates Mg(2+). 120 to 123 is a 7,8-dihydropteroate binding site; sequence TYFE. Glutamate 144 provides a ligand contact to Mg(2+). 151 to 153 serves as a coordination point for 7,8-dihydropteroate; sequence LDA. Histidine 171 is a binding site for Mg(2+). ATP-binding residues include asparagine 255, arginine 287, and aspartate 316.

Belongs to the folylpolyglutamate synthase family. In terms of assembly, monomer. Requires Mg(2+) as cofactor.

The enzyme catalyses 7,8-dihydropteroate + L-glutamate + ATP = 7,8-dihydrofolate + ADP + phosphate + H(+). It catalyses the reaction (6S)-5,6,7,8-tetrahydrofolyl-(gamma-L-Glu)(n) + L-glutamate + ATP = (6S)-5,6,7,8-tetrahydrofolyl-(gamma-L-Glu)(n+1) + ADP + phosphate + H(+). It carries out the reaction 10-formyltetrahydrofolyl-(gamma-L-Glu)(n) + L-glutamate + ATP = 10-formyltetrahydrofolyl-(gamma-L-Glu)(n+1) + ADP + phosphate + H(+). The catalysed reaction is (6R)-5,10-methylenetetrahydrofolyl-(gamma-L-Glu)(n) + L-glutamate + ATP = (6R)-5,10-methylenetetrahydrofolyl-(gamma-L-Glu)(n+1) + ADP + phosphate + H(+). The protein operates within cofactor biosynthesis; tetrahydrofolate biosynthesis; 7,8-dihydrofolate from 2-amino-4-hydroxy-6-hydroxymethyl-7,8-dihydropteridine diphosphate and 4-aminobenzoate: step 2/2. It functions in the pathway cofactor biosynthesis; tetrahydrofolylpolyglutamate biosynthesis. Its function is as follows. Functions in two distinct reactions of the de novo folate biosynthetic pathway. Catalyzes the addition of a glutamate residue to dihydropteroate (7,8-dihydropteroate or H2Pte) to form dihydrofolate (7,8-dihydrofolate monoglutamate or H2Pte-Glu). Also catalyzes successive additions of L-glutamate to tetrahydrofolate or 10-formyltetrahydrofolate or 5,10-methylenetetrahydrofolate, leading to folylpolyglutamate derivatives. The chain is Dihydrofolate synthase/folylpolyglutamate synthase (folC) from Haemophilus influenzae (strain ATCC 51907 / DSM 11121 / KW20 / Rd).